Consider the following 257-residue polypeptide: Phycoerythrobilin:ferredoxin oxidoreductase (257 aa).

The protein belongs to the HY2 family.

The catalysed reaction is (3Z)-phycoerythrobilin + oxidized 2[4Fe-4S]-[ferredoxin] = 15,16-dihydrobiliverdin + reduced 2[4Fe-4S]-[ferredoxin] + 2 H(+). Its function is as follows. Catalyzes the two-electron reduction of the C2 and C3(1) diene system of 15,16-dihydrobiliverdin. This chain is Phycoerythrobilin:ferredoxin oxidoreductase, found in Prochlorococcus marinus (strain MIT 9211).